The chain runs to 194 residues: 7-methyl-GTP pyrophosphatase (194 aa).

Residue aspartate 70 is the Proton acceptor of the active site.

Belongs to the Maf family. YceF subfamily. Requires a divalent metal cation as cofactor.

It is found in the cytoplasm. The enzyme catalyses N(7)-methyl-GTP + H2O = N(7)-methyl-GMP + diphosphate + H(+). Nucleoside triphosphate pyrophosphatase that hydrolyzes 7-methyl-GTP (m(7)GTP). May have a dual role in cell division arrest and in preventing the incorporation of modified nucleotides into cellular nucleic acids. This chain is 7-methyl-GTP pyrophosphatase, found in Vibrio vulnificus (strain CMCP6).